The following is a 380-amino-acid chain: High affinity transport system protein p37 (380 aa).

Positions 1–26 (MLKRKKLLQGFLKFLPLIIPATIFVS) are cleaved as a signal peptide. C27 carries N-palmitoyl cysteine lipidation. C27 is lipidated: S-diacylglycerol cysteine. The interval 285–304 (NHFYTPTENNGKGDSEKSNN) is disordered.

The protein localises to the cell membrane. Its function is as follows. P37 is part of a high-affinity transport system. This chain is High affinity transport system protein p37 (p37), found in Mycoplasma pneumoniae (strain ATCC 29342 / M129 / Subtype 1) (Mycoplasmoides pneumoniae).